The sequence spans 278 residues: Probable velvet family sexual development regulator SCHCODRAFT_28806 (278 aa).

Residues 51-255 enclose the Velvet domain; sequence GRTIRASLDE…ARVGVRLSVR (205 aa). The interval 257–278 is disordered; it reads TGKKATTKRRKRSDSFDEDDSS.

It belongs to the velvet family.

The protein resides in the nucleus. Velvet-domain-containing protein that probably acts as a positive regulator of sexual development. This Schizophyllum commune (strain H4-8 / FGSC 9210) (Split gill fungus) protein is Probable velvet family sexual development regulator SCHCODRAFT_28806.